The primary structure comprises 308 residues: Ribosomal protein L11 methyltransferase (308 aa).

The S-adenosyl-L-methionine site is built by Thr-148, Gly-169, Asp-191, and Asn-239.

Belongs to the methyltransferase superfamily. PrmA family.

The protein localises to the cytoplasm. The enzyme catalyses L-lysyl-[protein] + 3 S-adenosyl-L-methionine = N(6),N(6),N(6)-trimethyl-L-lysyl-[protein] + 3 S-adenosyl-L-homocysteine + 3 H(+). Methylates ribosomal protein L11. In Psychrobacter arcticus (strain DSM 17307 / VKM B-2377 / 273-4), this protein is Ribosomal protein L11 methyltransferase.